Here is a 434-residue protein sequence, read N- to C-terminus: GTPase Obg (434 aa).

The Obg domain occupies M1 to L158. Residues A159–D336 enclose the OBG-type G domain. Residues G165–S172, F190–V194, D212–G215, N282–D285, and S317–L319 contribute to the GTP site. Positions 172 and 192 each coordinate Mg(2+). Residues G356–D434 form the OCT domain.

The protein belongs to the TRAFAC class OBG-HflX-like GTPase superfamily. OBG GTPase family. In terms of assembly, monomer. Requires Mg(2+) as cofactor.

It is found in the cytoplasm. Its function is as follows. An essential GTPase which binds GTP, GDP and possibly (p)ppGpp with moderate affinity, with high nucleotide exchange rates and a fairly low GTP hydrolysis rate. Plays a role in control of the cell cycle, stress response, ribosome biogenesis and in those bacteria that undergo differentiation, in morphogenesis control. In Streptococcus pneumoniae (strain ATCC 700669 / Spain 23F-1), this protein is GTPase Obg.